The primary structure comprises 675 residues: Transmembrane protein 232 (675 aa).

Residues 163–183 (LVKIGYLIFLRLFVFFLHGHL) form a helical membrane-spanning segment. The stretch at 598 to 634 (WQKDMEARKREEEAYKAQNQKDKEEKEKIHFQEIMKQ) forms a coiled coil. The disordered stretch occupies residues 605-624 (RKREEEAYKAQNQKDKEEKE).

High expression in the testis and weak expression levels in the spleen, liver, brain, uterus, lung, epididymis and kidney. Not detected in the heart or ovary.

It is found in the membrane. Plays a critical role for male fertility and sperm motility by regulating sperm cytoplasm removal and maintaining axoneme integrity. This chain is Transmembrane protein 232 (Tmem232), found in Mus musculus (Mouse).